Here is a 393-residue protein sequence, read N- to C-terminus: MSRKNYVFTSESVSEGHPDKLCDRISDAVLDAFIAEEPEARVAAETFATTNRVVIGGEVGLSDKDKLHDYMDRIEAIARACIKDIGYEQDKFHHATCQVTNLLHEQSAHIAQGVDAAKGKDEGAGDQGIMFGYASNETPELMPAPIHYAHAVLRRLAEVRKDGTEPTLRPDAKSQLSVRYEDGKPVGVTSVVLSTQHADESQTSDDIRAIVEPYIREVLPDGWITGDTEWWVNPTGTFVIGGPDGDAGLTGRKIIVDTYGGAAPHGGGAFSGKDPTKVDRSAAYVARYLAKNVVAAGLANKCTIQLSYAIGVSKPLSIYCDTFGTGEVDEEEIERAIGKVMDLTPRGIREHLHLNKPIYERTAAYGHFGRAPDADGGFSWEKTDLADVLKAAL.

H17 contributes to the ATP binding site. D19 contacts Mg(2+). K(+) is bound at residue E45. L-methionine is bound by residues E58 and Q106. Residues 106-116 (QSAHIAQGVDA) form a flexible loop region. Residues 171 to 173 (DAK), D246, 252 to 253 (RK), A269, and K273 each bind ATP. D246 is a binding site for L-methionine. K277 lines the L-methionine pocket.

The protein belongs to the AdoMet synthase family. Homotetramer; dimer of dimers. Mg(2+) is required as a cofactor. Requires K(+) as cofactor.

The protein resides in the cytoplasm. It carries out the reaction L-methionine + ATP + H2O = S-adenosyl-L-methionine + phosphate + diphosphate. It participates in amino-acid biosynthesis; S-adenosyl-L-methionine biosynthesis; S-adenosyl-L-methionine from L-methionine: step 1/1. In terms of biological role, catalyzes the formation of S-adenosylmethionine (AdoMet) from methionine and ATP. The overall synthetic reaction is composed of two sequential steps, AdoMet formation and the subsequent tripolyphosphate hydrolysis which occurs prior to release of AdoMet from the enzyme. The sequence is that of S-adenosylmethionine synthase from Roseobacter denitrificans (strain ATCC 33942 / OCh 114) (Erythrobacter sp. (strain OCh 114)).